A 305-amino-acid polypeptide reads, in one-letter code: GMP synthase [glutamine-hydrolyzing] subunit B (305 aa).

Positions 2-185 constitute a GMPS ATP-PPase domain; the sequence is VDVDSFVEDA…LGLEEIISER (184 aa). An ATP-binding site is contributed by 29–35; the sequence is SGGVDSS.

As to quaternary structure, heterodimer composed of a glutamine amidotransferase subunit (A) and a GMP-binding subunit (B).

It catalyses the reaction XMP + L-glutamine + ATP + H2O = GMP + L-glutamate + AMP + diphosphate + 2 H(+). Its pathway is purine metabolism; GMP biosynthesis; GMP from XMP (L-Gln route): step 1/1. In terms of biological role, catalyzes the synthesis of GMP from XMP. The chain is GMP synthase [glutamine-hydrolyzing] subunit B from Halobacterium salinarum (strain ATCC 29341 / DSM 671 / R1).